The chain runs to 870 residues: Ubiquitin-protein ligase E3A (870 aa).

Ser-8 is subject to Phosphoserine. The C4-type; atypical zinc-finger motif lies at 42-81 (CGNEACTNEFCASCPTFLRMDNNAAAIKALELYKINAKLC). Basic and acidic residues predominate over residues 171 to 180 (EELKSLQEKD). The tract at residues 171-223 (EELKSLQEKDEDKDEDEKEKAACSAAAMEEDSEASSSRMGDSSQGDNNVQKLG) is disordered. Positions 208 to 220 (RMGDSSQGDNNVQ) are enriched in polar residues. Ser-213 is modified (phosphoserine). Positions 542 to 870 (NPADLKKQLY…ITYAKGFGML (329 aa)) constitute an HECT domain. Tyr-654 bears the Phosphotyrosine; by ABL1 mark. The active-site Glycyl thioester intermediate is Cys-838.

In terms of assembly, the active form is probably a homotrimer. Binds UBQLN1 and UBQLN2. Interacts with the 26S proteasome. Interacts with BPY2. Interacts with HIF1AN, MAPK6 and NEURL4; interaction with MAPK6 may be mediated by NEURL4. Interacts with the proteasomal subunit PSMD4. Interacts with BMAL1. Interacts with ARC. Interacts with ESR1 and WBP2. In terms of processing, phosphorylation at Tyr-654 by ABL1 impairs E3 ligase activity. As to expression, widely expressed. Most abundant in brain, heart and thymus.

The protein localises to the cytoplasm. It localises to the nucleus. It carries out the reaction S-ubiquitinyl-[E2 ubiquitin-conjugating enzyme]-L-cysteine + [acceptor protein]-L-lysine = [E2 ubiquitin-conjugating enzyme]-L-cysteine + N(6)-ubiquitinyl-[acceptor protein]-L-lysine.. It functions in the pathway protein modification; protein ubiquitination. E3 ubiquitin-protein ligase which accepts ubiquitin from an E2 ubiquitin-conjugating enzyme in the form of a thioester and transfers it to its substrates. Several substrates have been identified including the BMAL1, ARC, LAMTOR1, RAD23A and RAD23B, MCM7 (which is involved in DNA replication), annexin A1, the PML tumor suppressor, and the cell cycle regulator CDKN1B. Additionally, may function as a cellular quality control ubiquitin ligase by helping the degradation of the cytoplasmic misfolded proteins. Finally, UBE3A also promotes its own degradation in vivo. Plays an important role in the regulation of the circadian clock: involved in the ubiquitination of the core clock component BMAL1, leading to its proteasomal degradation. Acts as a regulator of synaptic development by mediating ubiquitination and degradation of ARC. Required for synaptic remodeling in neurons by mediating ubiquitination and degradation of LAMTOR1, thereby limiting mTORC1 signaling and activity-dependent synaptic remodeling. Synergizes with WBP2 in enhancing PGR activity. This chain is Ubiquitin-protein ligase E3A, found in Mus musculus (Mouse).